The primary structure comprises 159 residues: Phosphodiesterase delta-like protein (159 aa).

The protein belongs to the PDE6D/unc-119 family.

This is Phosphodiesterase delta-like protein (pdl-1) from Caenorhabditis elegans.